We begin with the raw amino-acid sequence, 163 residues long: Transcriptional repressor NrdR (163 aa).

Residues 3–34 (CPKCNYLKSSVVDSRQAEEGNTIRRRRECENC) fold into a zinc finger. An ATP-cone domain is found at 49 to 139 (LLVVKKDGTR…VYRSFKDVDE (91 aa)).

This sequence belongs to the NrdR family. It depends on Zn(2+) as a cofactor.

In terms of biological role, negatively regulates transcription of bacterial ribonucleotide reductase nrd genes and operons by binding to NrdR-boxes. In Streptococcus mutans serotype c (strain ATCC 700610 / UA159), this protein is Transcriptional repressor NrdR.